A 588-amino-acid polypeptide reads, in one-letter code: DELLA protein GAI (588 aa).

Residues 1–15 (MKRDRDRDREREKRA) are compositionally biased toward basic and acidic residues. The disordered stretch occupies residues 1-38 (MKRDRDRDREREKRAFSNGAVSSGKSKIWEEDEEEKPD). The DELLA motif signature appears at 42-46 (DELLA). Residues 152-177 (GAVFNSDSNKRHRSTTSSFSTTSSSM) form a disordered region. Residues 166 to 177 (TTSSFSTTSSSM) are compositionally biased toward low complexity. The GRAS domain occupies 190–574 (VDSQETGVRL…RPLIATSAWK (385 aa)). The segment at 197–251 (VRLVHTLMACAEAVQQENLTLADQLVRHIGILAVSQSGAMRKVATYFAEALARRI) is leucine repeat I (LRI). The tract at residues 269 to 334 (QMHFYETCPY…GGPPAFRLTG (66 aa)) is VHIID. Positions 300 to 304 (VHVID) match the VHIID motif. The segment at 348–380 (QVGWKLAQLAETIGVEFEFRGFVANSLADLDAT) is leucine repeat II (LRII). The tract at residues 392–495 (VAINSVFELH…EVYLGRQICN (104 aa)) is PFYRE. Positions 400-404 (LHRLL) match the LXXLL motif motif. Positions 498–574 (ACEGSDRVER…RPLIATSAWK (77 aa)) are SAW.

This sequence belongs to the GRAS family. DELLA subfamily. Post-translationally, phosphorylated. In terms of processing, ubiquitinated. Upon GA application it is ubiquitinated, leading to its subsequent degradation. As to expression, expressed in both vegetative and reproductive tissues.

It is found in the nucleus. In terms of biological role, probable transcriptional regulator that acts as a repressor of the gibberellin (GA) signaling pathway. Probably acts by participating in large multiprotein complexes that repress transcription of GA-inducible genes. Upon GA application, it is degraded by the proteasome, allowing the GA signaling pathway. Its degradation is not essential for germination. In Solanum lycopersicum (Tomato), this protein is DELLA protein GAI (GAI).